Reading from the N-terminus, the 116-residue chain is NADH-ubiquinone oxidoreductase chain 3 (116 aa).

3 helical membrane-spanning segments follow: residues 3–23, 56–76, and 87–107; these read LITTIITITITLSAVLATISF, FFLIAILFLLFDLEIALLLPL, and LTLIWSTAVLALLTLGLIYEW.

Belongs to the complex I subunit 3 family.

It localises to the mitochondrion membrane. It catalyses the reaction a ubiquinone + NADH + 5 H(+)(in) = a ubiquinol + NAD(+) + 4 H(+)(out). In terms of biological role, core subunit of the mitochondrial membrane respiratory chain NADH dehydrogenase (Complex I) that is believed to belong to the minimal assembly required for catalysis. Complex I functions in the transfer of electrons from NADH to the respiratory chain. The immediate electron acceptor for the enzyme is believed to be ubiquinone. The protein is NADH-ubiquinone oxidoreductase chain 3 (MT-ND3) of Oncorhynchus tshawytscha (Chinook salmon).